Consider the following 909-residue polypeptide: Translation initiation factor IF-2 (909 aa).

The segment at 49–314 (LNREQGGSAG…GKQRKTSTLQ (266 aa)) is disordered. 3 stretches are compositionally biased toward basic and acidic residues: residues 99-177 (DAVE…EHKQ), 186-236 (IQSE…KWSS), and 255-270 (RAAEDENDAKVEGDRR). Positions 271-285 (ARGRSGKATRQKKNN) are enriched in basic residues. Over residues 286-299 (KHSESKADREEARA) the composition is skewed to basic and acidic residues. Positions 408 to 577 (PRAPVVTIMG…LLQAEVLELK (170 aa)) constitute a tr-type G domain. The tract at residues 417–424 (GHVDHGKT) is G1. 417–424 (GHVDHGKT) lines the GTP pocket. The G2 stretch occupies residues 442–446 (GITQH). Positions 463 to 466 (DTPG) are G3. GTP contacts are provided by residues 463 to 467 (DTPGH) and 517 to 520 (NKID). Residues 517 to 520 (NKID) are G4. A G5 region spans residues 553-555 (SAK).

This sequence belongs to the TRAFAC class translation factor GTPase superfamily. Classic translation factor GTPase family. IF-2 subfamily.

It is found in the cytoplasm. In terms of biological role, one of the essential components for the initiation of protein synthesis. Protects formylmethionyl-tRNA from spontaneous hydrolysis and promotes its binding to the 30S ribosomal subunits. Also involved in the hydrolysis of GTP during the formation of the 70S ribosomal complex. In Photorhabdus laumondii subsp. laumondii (strain DSM 15139 / CIP 105565 / TT01) (Photorhabdus luminescens subsp. laumondii), this protein is Translation initiation factor IF-2.